The chain runs to 1286 residues: MRPSPPPAAPAAEPVPPWLRSLPVAPEFRPTAAEFADPVSYILKIEPAAAPYGICKVVPPLPPPPKKATFSNLSRSFAALHPDDRSPSFPTRHQQVGLCPRRTRPGLKPVWRSSHRYTLPQFESKAGATRKSLLAGLNFPASRQLTPLDHEVLFWRASADRPIVVEYGSDMSGSGFSPCAAQPQPPPQQQPTARAAAHLGETAWNMRGVARSPGSLLRFMPEDVPGVTTPMLYVGMMFSWFAWHVEDHDLHSLNYMHLGAAKTWYGVPRDAALAFEDVVREHGYGGEVNPLETFATLGQKTTVMSPEVLVESGIPCCRLVQNAGEFVVTFPGSYHCGFSHGFNCGEASNIATPEWLRIAKEAAIRRASINRPPMVSHYQLLYDLALSMRFREPSNGEMETRSSRIKEKKKCEGEQLVKKMFIQNVIEDNELLSHLLNDGSSCIILPANAHDGPGLSTLRSTDQSNMNSRISHNLCSREEAPEASGCLSPNRNGDTRNCISSDTHNMEGDKGDIMSATGLLDQGLLSCVTCGILSFSCVAVLKPRDSTARYLMSADSNSINNQLSISGGSILADAPTNERNGVISRPYSEHCCNEIMADDAEIDKNSALDLLAFAHGGQPDPEEDPLEKILKIAHGINKSQPNSSNNVGCVGTKLSSSSTERQERPSSQNAHCNGSSVISNGPKGVRTRNKYQLKMVLSEGFQAKDIYSAKEKKVQSEPSSSKGDVKETIDVSGTENDVGCKSTTISVSEHRGSTKNMYSVKEKKVQSKPSSLKGTVKETVDVSGTENDARCKSITISVSEHRGSTPMTNSLAASIVKPDKDSSRMHVFCLEHAIEVEKQLHAIGGSNIMLICRPEYPKIEAEARLLGEEMGLVYDWKGIHFKEANMEDRQKIQEVLRDEEAIPTSSDWAVKLGINLYYSANLAKSPLYNKQMPYNRVIYRAFGCDSPNDSPVMFNTCERKQSHQKKIVVAGRWCGKVWMSKQVHPYLAHRVESQEAEEADRICSYHFDEKHKAEPVGNSSRVEASKRKSSSLTDVTESSNRRGEIPGEETNTKRPKHSQENNLRALETAAEVVVPSPAGTGLRVSSRIANRANKLKSKMEKEDVPSSRPKSNIKEKSSHASGQKSNVQEANANSASHLRAMPPKQKAEAEAKKQIRTPKPPKQAVEYSCDIEGCSMSFRTKRDLSLHKSDICPVKGCGKKFFSHKYLLQHRKVHTDDRPLTCPWKGCNMAFKWPWARTEHLRVHTGDRPYVCHEPGCAQTFRFVSDFSRHKRKTGHSVKKKKKAKS.

Positions 25 to 66 constitute a JmjN domain; it reads APEFRPTAAEFADPVSYILKIEPAAAPYGICKVVPPLPPPPK. A disordered region spans residues 82-105; the sequence is PDDRSPSFPTRHQQVGLCPRRTRP. The region spanning 201–367 is the JmjC domain; that stretch reads ETAWNMRGVA…IAKEAAIRRA (167 aa). Residues His244, Glu246, and His335 each contribute to the Fe cation site. Positions 641–679 are enriched in polar residues; the sequence is PNSSNNVGCVGTKLSSSSTERQERPSSQNAHCNGSSVIS. Disordered regions lie at residues 641-686, 1013-1060, and 1077-1164; these read PNSS…KGVR, AEPV…HSQE, and PAGT…PKQA. Polar residues predominate over residues 1119 to 1136; the sequence is HASGQKSNVQEANANSAS. The C2H2-type 1; degenerate zinc finger occupies 1167–1189; that stretch reads YSCDIEGCSMSFRTKRDLSLHKS. 3 consecutive C2H2-type zinc fingers follow at residues 1190–1214, 1220–1244, and 1250–1276; these read DICPVKGCGKKFFSHKYLLQHRKVH, LTCPWKGCNMAFKWPWARTEHLRVH, and YVCHEPGCAQTFRFVSDFSRHKRKTGH.

The cofactor is Fe(2+). As to expression, expressed in leaves and flag leaves. Expressed at low levels in roots, shoots, stems and panicles.

It is found in the nucleus. It catalyses the reaction N(6),N(6),N(6)-trimethyl-L-lysyl(27)-[histone H3] + 2 2-oxoglutarate + 2 O2 = N(6)-methyl-L-lysyl(27)-[histone H3] + 2 formaldehyde + 2 succinate + 2 CO2. In terms of biological role, histone demethylase that demethylates 'Lys-27' (H3K27me) of histone H3 with a specific activity for H3K27me3 and H3K27me2. No activity on H3K4me3, H3K9me3, H3K27me1 and H3K36me3. Involved in biotic stress response. May demethylate H3K27me3-marked defense-related genes and increase their basal and induced expression levels during pathogen infection. The protein is Lysine-specific demethylase JMJ705 (JMJ705) of Oryza sativa subsp. japonica (Rice).